A 549-amino-acid chain; its full sequence is Hydroxylamine reductase (549 aa).

[4Fe-4S] cluster-binding residues include Cys-3, Cys-6, Cys-15, and Cys-21. Positions 244, 268, 313, 405, 433, 458, 492, and 494 each coordinate hybrid [4Fe-2O-2S] cluster. Cys-405 carries the post-translational modification Cysteine persulfide.

It belongs to the HCP family. Requires [4Fe-4S] cluster as cofactor. Hybrid [4Fe-2O-2S] cluster serves as cofactor.

The protein localises to the cytoplasm. The catalysed reaction is A + NH4(+) + H2O = hydroxylamine + AH2 + H(+). Catalyzes the reduction of hydroxylamine to form NH(3) and H(2)O. The polypeptide is Hydroxylamine reductase (Gloeothece citriformis (strain PCC 7424) (Cyanothece sp. (strain PCC 7424))).